A 170-amino-acid polypeptide reads, in one-letter code: Putative zinc finger protein 542 (170 aa).

A KRAB domain is found at 1–42; the sequence is MLENYQNLVWLGLSISKSVISLLEKRKLPWIMAKEEIRGPLP. C2H2-type zinc fingers lie at residues 98 to 120 and 126 to 148; these read NVCKECGNLYCHNMQLTLHKRNH and NQCLDCGKYFTRQSTLIQHQRIH. The C2H2-type 3; degenerate zinc finger occupies 154-170; the sequence is YKCNECIKTFNQRAHLT.

The protein belongs to the krueppel C2H2-type zinc-finger protein family.

It is found in the nucleus. Its function is as follows. May be involved in transcriptional regulation. The protein is Putative zinc finger protein 542 (ZNF542P) of Homo sapiens (Human).